The following is a 341-amino-acid chain: Phosphoribosylformylglycinamidine cyclo-ligase (341 aa).

The protein belongs to the AIR synthase family.

The protein resides in the cytoplasm. The enzyme catalyses 2-formamido-N(1)-(5-O-phospho-beta-D-ribosyl)acetamidine + ATP = 5-amino-1-(5-phospho-beta-D-ribosyl)imidazole + ADP + phosphate + H(+). It functions in the pathway purine metabolism; IMP biosynthesis via de novo pathway; 5-amino-1-(5-phospho-D-ribosyl)imidazole from N(2)-formyl-N(1)-(5-phospho-D-ribosyl)glycinamide: step 2/2. In Xanthomonas campestris pv. campestris (strain B100), this protein is Phosphoribosylformylglycinamidine cyclo-ligase.